The following is a 181-amino-acid chain: Der GTPase-activating protein YihI (181 aa).

The disordered stretch occupies residues 1-73 (MSRIKKARKP…DPRIGSKKPI (73 aa)). Basic and acidic residues predominate over residues 22–32 (NRTDRDVESRE). The segment covering 33–42 (LKRKRKRKGL) has biased composition (basic residues). The segment covering 55-67 (QARRNAQKKDPRI) has biased composition (basic and acidic residues).

It belongs to the YihI family. As to quaternary structure, interacts with Der.

A GTPase-activating protein (GAP) that modifies Der/EngA GTPase function. May play a role in ribosome biogenesis. This Aliivibrio fischeri (strain MJ11) (Vibrio fischeri) protein is Der GTPase-activating protein YihI.